A 467-amino-acid polypeptide reads, in one-letter code: tRNA(Ile)-lysidine synthase (467 aa).

35–40 lines the ATP pocket; the sequence is SGGPDS.

This sequence belongs to the tRNA(Ile)-lysidine synthase family.

The protein resides in the cytoplasm. It carries out the reaction cytidine(34) in tRNA(Ile2) + L-lysine + ATP = lysidine(34) in tRNA(Ile2) + AMP + diphosphate + H(+). Functionally, ligates lysine onto the cytidine present at position 34 of the AUA codon-specific tRNA(Ile) that contains the anticodon CAU, in an ATP-dependent manner. Cytidine is converted to lysidine, thus changing the amino acid specificity of the tRNA from methionine to isoleucine. The sequence is that of tRNA(Ile)-lysidine synthase from Caldanaerobacter subterraneus subsp. tengcongensis (strain DSM 15242 / JCM 11007 / NBRC 100824 / MB4) (Thermoanaerobacter tengcongensis).